The chain runs to 139 residues: Ribulose bisphosphate carboxylase small subunit, chromosomal (139 aa).

It belongs to the RuBisCO small chain family. Heterohexadecamer of 8 large and 8 small subunits.

Its function is as follows. RuBisCO catalyzes two reactions: the carboxylation of D-ribulose 1,5-bisphosphate, the primary event in carbon dioxide fixation, as well as the oxidative fragmentation of the pentose substrate. Both reactions occur simultaneously and in competition at the same active site. Although the small subunit is not catalytic it is essential for maximal activity. This chain is Ribulose bisphosphate carboxylase small subunit, chromosomal, found in Cupriavidus necator (Alcaligenes eutrophus).